We begin with the raw amino-acid sequence, 703 residues long: Calcium-responsive transcription factor (703 aa).

3 disordered regions span residues 1–61 (MEQS…QNIP), 130–150 (GPLV…SDRN), and 517–539 (GNSQ…SLSP). The span at 9–22 (KVNHNDSEESKTDS) shows a compositional bias: basic and acidic residues. Polar residues predominate over residues 23–34 (QHLTYMDSSEPS).

It is found in the nucleus. Acts as a transcriptional activator that mediates the calcium- and neuron-selective induction of BDNF exon III transcription. Binds to the consensus calcium-response element CaRE1 5'-CTATTTCGAG-3' sequence. In Bos taurus (Bovine), this protein is Calcium-responsive transcription factor (CARF).